We begin with the raw amino-acid sequence, 240 residues long: MKIDYLTLFPEMFDVLNHSIMKRAQEKGIVELNTVNFRDYSGNKHNQVDDYPYGGGQGMVLKPEPIFNAMNAIDKTSKTRVILMCPQGKPFTQQVAESLAQEEHLVFICGHYEGYDERIREHLVTDELSIGDYVLTGGELAAITMTDAIVRLIPESIKEESHLDDSFSTGLLEYPQYTRPADYNGMKVPDVLLSGNHKHIESWRHEMRLKRTFERRPDLLEHYPLTQSDKEYLEHLKRDK.

S-adenosyl-L-methionine is bound by residues Gly-110 and 130–135 (IGDYVL).

The protein belongs to the RNA methyltransferase TrmD family. Homodimer.

The protein localises to the cytoplasm. It catalyses the reaction guanosine(37) in tRNA + S-adenosyl-L-methionine = N(1)-methylguanosine(37) in tRNA + S-adenosyl-L-homocysteine + H(+). In terms of biological role, specifically methylates guanosine-37 in various tRNAs. The polypeptide is tRNA (guanine-N(1)-)-methyltransferase (Macrococcus caseolyticus (strain JCSC5402) (Macrococcoides caseolyticum)).